The following is an 85-amino-acid chain: UPF0181 protein YPO1774/y2534/YP_1619 (85 aa).

The segment at 50-85 (QAMAIFEDHDFDEHTESDYRRDDEPDADDIEDPYEG) is disordered. Positions 55-72 (FEDHDFDEHTESDYRRDD) are enriched in basic and acidic residues. Residues 73 to 85 (EPDADDIEDPYEG) are compositionally biased toward acidic residues.

This sequence belongs to the UPF0181 family.

This is UPF0181 protein YPO1774/y2534/YP_1619 from Yersinia pestis.